A 225-amino-acid polypeptide reads, in one-letter code: MNLIEFPLLDQTSSNSVISTTPNDLSNWSRLSSLWPLLYGTSCCFIEFASLIGSRFDFDRYGLVPRSSPRQADLILTAGTVTMKMAPSLVRLYEQMPEPKYVIAMGACTITGGMFSTDSYSTVRGVDKLIPVDVYLPGCPPKPEAVIDALTKLRKKISREIVEDRTLSQNKNRCFTTSHKLYVRRSTHTGTYEQELLYQSPSTLDISSETFFKSKSSVPSYKLVN.

Cys-43, Cys-44, Cys-108, and Cys-139 together coordinate [4Fe-4S] cluster.

Belongs to the complex I 20 kDa subunit family. In terms of assembly, NDH is composed of at least 16 different subunits, 5 of which are encoded in the nucleus. It depends on [4Fe-4S] cluster as a cofactor.

Its subcellular location is the plastid. It localises to the chloroplast thylakoid membrane. The catalysed reaction is a plastoquinone + NADH + (n+1) H(+)(in) = a plastoquinol + NAD(+) + n H(+)(out). The enzyme catalyses a plastoquinone + NADPH + (n+1) H(+)(in) = a plastoquinol + NADP(+) + n H(+)(out). NDH shuttles electrons from NAD(P)H:plastoquinone, via FMN and iron-sulfur (Fe-S) centers, to quinones in the photosynthetic chain and possibly in a chloroplast respiratory chain. The immediate electron acceptor for the enzyme in this species is believed to be plastoquinone. Couples the redox reaction to proton translocation, and thus conserves the redox energy in a proton gradient. This chain is NAD(P)H-quinone oxidoreductase subunit K, chloroplastic, found in Triticum aestivum (Wheat).